The chain runs to 395 residues: MKLAMIGFGQAGGKVVDKFVEYDRERNAGIVRAAVAVNSAKADLLGLKNIPKDQRVLIGQSRVKGHGVGADNELGAEIAEEDIDEVQGAIDSIPVHEVDAFLVVSGLGGGTGSGGAPVLAKHLKRIYTEPVYGLGILPGSDEGGIYTLNAARSFQTFVREVDNLLVFDNDAWRKTGESVQGGYDEINEEIVNRFGVLFGAGEVQDGQEVAESVVDSSEIINTLAGGGVSTVGYASEGVEPRKNNGGGLLSRLTGGDEPDDNLDTAHTTNRITSLVRKAALGRLTLPCEIEGAERALLVLAGPPEHLNRKGIERGRKWIEEQTGSMEVRGGDYPIPGAEKVAGVILLSGVTNVPRIKELQQVAIEAQDNIEEIRQESDSNLETLINDDEDELESLF.

Residues 10–14 (QAGGK), 110–112 (GTG), Glu-142, Asn-169, and Asn-187 each bind GTP.

Belongs to the CetZ family.

The protein localises to the cytoplasm. Its function is as follows. Involved in cell shape control. Essential for the development of a rod-shaped cell type required for efficient swimming. This is Tubulin-like protein CetZ1 from Haloferax volcanii (strain ATCC 29605 / DSM 3757 / JCM 8879 / NBRC 14742 / NCIMB 2012 / VKM B-1768 / DS2) (Halobacterium volcanii).